The primary structure comprises 96 residues: Small ribosomal subunit protein bS6 (96 aa).

Belongs to the bacterial ribosomal protein bS6 family.

Binds together with bS18 to 16S ribosomal RNA. The sequence is that of Small ribosomal subunit protein bS6 from Streptococcus gordonii (strain Challis / ATCC 35105 / BCRC 15272 / CH1 / DL1 / V288).